The primary structure comprises 295 residues: ATP synthase gamma chain (295 aa).

The protein belongs to the ATPase gamma chain family. F-type ATPases have 2 components, CF(1) - the catalytic core - and CF(0) - the membrane proton channel. CF(1) has five subunits: alpha(3), beta(3), gamma(1), delta(1), epsilon(1). CF(0) has three main subunits: a, b and c.

Its subcellular location is the cell inner membrane. Produces ATP from ADP in the presence of a proton gradient across the membrane. The gamma chain is believed to be important in regulating ATPase activity and the flow of protons through the CF(0) complex. The chain is ATP synthase gamma chain from Methylorubrum populi (strain ATCC BAA-705 / NCIMB 13946 / BJ001) (Methylobacterium populi).